The chain runs to 403 residues: Argininosuccinate synthase (403 aa).

10-18 (AYSGGLDTS) provides a ligand contact to ATP. Position 87 (Y87) interacts with L-citrulline. Position 117 (G117) interacts with ATP. L-aspartate-binding residues include T119, N123, and D124. N123 serves as a coordination point for L-citrulline. L-citrulline contacts are provided by R127, S175, E260, and Y272.

It belongs to the argininosuccinate synthase family. Type 1 subfamily. Homotetramer.

It localises to the cytoplasm. It carries out the reaction L-citrulline + L-aspartate + ATP = 2-(N(omega)-L-arginino)succinate + AMP + diphosphate + H(+). It functions in the pathway amino-acid biosynthesis; L-arginine biosynthesis; L-arginine from L-ornithine and carbamoyl phosphate: step 2/3. In Bacillus velezensis (strain DSM 23117 / BGSC 10A6 / LMG 26770 / FZB42) (Bacillus amyloliquefaciens subsp. plantarum), this protein is Argininosuccinate synthase.